Here is a 342-residue protein sequence, read N- to C-terminus: Elongation factor Ts (342 aa).

Residues 79–82 (TDFV) form an involved in Mg(2+) ion dislocation from EF-Tu region.

This sequence belongs to the EF-Ts family.

Its subcellular location is the cytoplasm. In terms of biological role, associates with the EF-Tu.GDP complex and induces the exchange of GDP to GTP. It remains bound to the aminoacyl-tRNA.EF-Tu.GTP complex up to the GTP hydrolysis stage on the ribosome. This is Elongation factor Ts (tsf) from Lactococcus lactis subsp. lactis (strain IL1403) (Streptococcus lactis).